The chain runs to 843 residues: Protein P (843 aa).

A terminal protein domain (TP) region spans residues Met-1–Gln-177. The spacer stretch occupies residues Glu-178–Leu-346. Disordered regions lie at residues Gln-180–Ser-221 and Arg-282–Arg-313. Positions Ser-196–Ser-221 are enriched in polar residues. Residues Glu-347–Gln-690 are polymerase/reverse transcriptase domain (RT). A Reverse transcriptase domain is found at Gln-357–Ile-600. Asp-429, Asp-551, and Asp-552 together coordinate Mg(2+).

Belongs to the hepadnaviridae P protein family.

The catalysed reaction is DNA(n) + a 2'-deoxyribonucleoside 5'-triphosphate = DNA(n+1) + diphosphate. It carries out the reaction Endonucleolytic cleavage to 5'-phosphomonoester.. Its activity is regulated as follows. Activated by host HSP70 and HSP40 in vitro to be able to bind the epsilon loop of the pgRNA. Because deletion of the RNase H region renders the protein partly chaperone-independent, the chaperones may be needed indirectly to relieve occlusion of the RNA-binding site by this domain. Inhibited by several reverse-transcriptase inhibitors: Lamivudine, Adefovir and Entecavir. Its function is as follows. Multifunctional enzyme that converts the viral RNA genome into dsDNA in viral cytoplasmic capsids. This enzyme displays a DNA polymerase activity that can copy either DNA or RNA templates, and a ribonuclease H (RNase H) activity that cleaves the RNA strand of RNA-DNA heteroduplexes in a partially processive 3'- to 5'-endonucleasic mode. Neo-synthesized pregenomic RNA (pgRNA) are encapsidated together with the P protein, and reverse-transcribed inside the nucleocapsid. Initiation of reverse-transcription occurs first by binding the epsilon loop on the pgRNA genome, and is initiated by protein priming, thereby the 5'-end of (-)DNA is covalently linked to P protein. Partial (+)DNA is synthesized from the (-)DNA template and generates the relaxed circular DNA (RC-DNA) genome. After budding and infection, the RC-DNA migrates in the nucleus, and is converted into a plasmid-like covalently closed circular DNA (cccDNA). The activity of P protein does not seem to be necessary for cccDNA generation, and is presumably released from (+)DNA by host nuclear DNA repair machinery. The polypeptide is Protein P (Homo sapiens (Human)).